The chain runs to 555 residues: Potassium-transporting ATPase potassium-binding subunit (555 aa).

10 helical membrane-spanning segments follow: residues 2–22 (IWVA…PTGI), 60–80 (QYAL…YFVF), 130–150 (IGIT…VMAF), 173–193 (VFLP…VPQT), 246–266 (MSNI…PFTY), 278–298 (ILFV…TTSE), 374–394 (AGFV…GLMV), 412–432 (LIAV…ALAL), 483–503 (LVMF…AASL), and 525–545 (GIFI…MLVL).

This sequence belongs to the KdpA family. In terms of assembly, the system is composed of three essential subunits: KdpA, KdpB and KdpC.

The protein localises to the cell membrane. Functionally, part of the high-affinity ATP-driven potassium transport (or Kdp) system, which catalyzes the hydrolysis of ATP coupled with the electrogenic transport of potassium into the cytoplasm. This subunit binds the extracellular potassium ions and delivers the ions to the membrane domain of KdpB through an intramembrane tunnel. This chain is Potassium-transporting ATPase potassium-binding subunit, found in Bacillus cereus (strain ATCC 10987 / NRS 248).